Consider the following 758-residue polypeptide: ATP-dependent RNA helicase dbp7 (758 aa).

Disordered stretches follow at residues threonine 28–arginine 98 and glutamate 110–asparagine 130. Residues alanine 35 to glycine 45 show a composition bias toward basic residues. Polar residues predominate over residues glycine 84–arginine 98. Residues glutamate 110 to asparagine 125 are compositionally biased toward basic and acidic residues. A Q motif motif is present at residues aspartate 138–lysine 167. The region spanning serine 171 to isoleucine 372 is the Helicase ATP-binding domain. Alanine 184–threonine 191 serves as a coordination point for ATP. Residues aspartate 308–aspartate 311 carry the DEAD box motif. The Helicase C-terminal domain maps to glutamine 398–glutamate 620. Basic and acidic residues-rich tracts occupy residues lysine 455 to proline 471 and glycine 697 to arginine 709. 2 disordered regions span residues lysine 455–threonine 483 and glycine 697–methionine 745.

This sequence belongs to the DEAD box helicase family. DDX31/DBP7 subfamily.

Its subcellular location is the nucleus. The protein localises to the nucleolus. It catalyses the reaction ATP + H2O = ADP + phosphate + H(+). Its function is as follows. ATP-binding RNA helicase involved in the biogenesis of 60S ribosomal subunits and is required for the normal formation of 25S and 5.8S rRNAs. In Aspergillus fumigatus (strain ATCC MYA-4609 / CBS 101355 / FGSC A1100 / Af293) (Neosartorya fumigata), this protein is ATP-dependent RNA helicase dbp7 (dbp7).